The chain runs to 782 residues: Phosphoribosylformylglycinamidine synthase subunit PurL (782 aa).

The active site involves His-50. ATP is bound by residues Tyr-53 and Lys-92. Mg(2+) is bound at residue Glu-94. Residues 95–98 (SHNH) and Arg-117 each bind substrate. Residue His-96 is the Proton acceptor of the active site. Mg(2+) is bound at residue Asp-118. Gln-241 contacts substrate. A Mg(2+)-binding site is contributed by Asp-269. Residue 313–315 (ESQ) participates in substrate binding. The ATP site is built by Asp-520 and Gly-557. Mg(2+) is bound at residue Asn-558. Ser-560 contributes to the substrate binding site.

It belongs to the FGAMS family. As to quaternary structure, monomer. Part of the FGAM synthase complex composed of 1 PurL, 1 PurQ and 2 PurS subunits.

It localises to the cytoplasm. It catalyses the reaction N(2)-formyl-N(1)-(5-phospho-beta-D-ribosyl)glycinamide + L-glutamine + ATP + H2O = 2-formamido-N(1)-(5-O-phospho-beta-D-ribosyl)acetamidine + L-glutamate + ADP + phosphate + H(+). It functions in the pathway purine metabolism; IMP biosynthesis via de novo pathway; 5-amino-1-(5-phospho-D-ribosyl)imidazole from N(2)-formyl-N(1)-(5-phospho-D-ribosyl)glycinamide: step 1/2. Functionally, part of the phosphoribosylformylglycinamidine synthase complex involved in the purines biosynthetic pathway. Catalyzes the ATP-dependent conversion of formylglycinamide ribonucleotide (FGAR) and glutamine to yield formylglycinamidine ribonucleotide (FGAM) and glutamate. The FGAM synthase complex is composed of three subunits. PurQ produces an ammonia molecule by converting glutamine to glutamate. PurL transfers the ammonia molecule to FGAR to form FGAM in an ATP-dependent manner. PurS interacts with PurQ and PurL and is thought to assist in the transfer of the ammonia molecule from PurQ to PurL. The sequence is that of Phosphoribosylformylglycinamidine synthase subunit PurL from Cyanothece sp. (strain PCC 7425 / ATCC 29141).